We begin with the raw amino-acid sequence, 134 residues long: Cytochrome c-550 (134 aa).

Position 1 is a pyrrolidone carboxylic acid (Gln1). Residues Cys15, Cys18, His19, and Met100 each contribute to the heme c site.

Binds 1 heme c group covalently per subunit.

Functionally, electron donor for nitrous-oxide reductase. The polypeptide is Cytochrome c-550 (Paracoccus pantotrophus (Thiosphaera pantotropha)).